The following is a 326-amino-acid chain: Phosphate acyltransferase (326 aa).

It belongs to the PlsX family. Homodimer. Probably interacts with PlsY.

Its subcellular location is the cytoplasm. The enzyme catalyses a fatty acyl-[ACP] + phosphate = an acyl phosphate + holo-[ACP]. It functions in the pathway lipid metabolism; phospholipid metabolism. Catalyzes the reversible formation of acyl-phosphate (acyl-PO(4)) from acyl-[acyl-carrier-protein] (acyl-ACP). This enzyme utilizes acyl-ACP as fatty acyl donor, but not acyl-CoA. In Thermus thermophilus (strain ATCC BAA-163 / DSM 7039 / HB27), this protein is Phosphate acyltransferase.